The chain runs to 623 residues: uncharacterized protein (623 aa).

Positions 24 to 51 form a coiled coil; the sequence is RALVQKDELAQASQDVEDMRDCYDSLLN. Disordered stretches follow at residues 148 to 170, 240 to 343, 362 to 393, 454 to 531, and 585 to 607; these read TRQR…QQLQ, FSGL…TTPP, ALPT…TKAI, SFSG…LGYS, and KKLG…PQAL. Positions 243–259 are enriched in acidic residues; the sequence is LEDDDGDDEIENNENDG. Residues 328–343 show a composition bias toward polar residues; the sequence is VSQSAPLFPENRTTPP. Low complexity predominate over residues 364–379; that stretch reads PTPVETTRSPSSTTSP. The span at 384–393 shows a compositional bias: polar residues; the sequence is VGSSNPTKAI. Positions 484–495 are enriched in low complexity; that stretch reads PVSKLPKVSSSP. Residues 496-506 show a composition bias toward polar residues; sequence TASPTFVSTPK. The segment covering 590–606 has biased composition (pro residues); that stretch reads PSPPLTPMSLIHPPPQA.

This is an uncharacterized protein from Arabidopsis thaliana (Mouse-ear cress).